We begin with the raw amino-acid sequence, 912 residues long: Ubiquitin carboxyl-terminal hydrolase 20 (912 aa).

The segment at 6-111 adopts a UBP-type zinc-finger fold; sequence DLCPHLDSIG…GPAPKFSEQD (106 aa). Positions 8, 10, 30, 33, 43, 48, 53, 60, 64, 70, 83, and 86 each coordinate Zn(2+). The interval 101–120 is disordered; that stretch reads PGPAPKFSEQDSPPPSHPLK. 3 positions are modified to phosphoserine: Ser112, Ser132, and Ser134. In terms of domain architecture, USP spans 145-683; sequence TGMKNLGNSC…EAYVLFYRKS (539 aa). Cys154 serves as the catalytic Nucleophile. 2 disordered regions span residues 258–308 and 322–415; these read LTEA…GSQA and ISEK…ASPV. Thr259 bears the Phosphothreonine mark. Basic and acidic residues predominate over residues 260 to 280; the sequence is EARDSDSSDTDEKREGDRSPS. Ser306 is subject to Phosphoserine. Residues 322–333 show a composition bias toward basic and acidic residues; sequence ISEKERMKDRKF. A Phosphoserine modification is found at Ser369. Residue Thr378 is modified to Phosphothreonine. Residues Ser408 and Ser413 each carry the phosphoserine modification. His641 (proton acceptor) is an active-site residue. DUSP domains are found at residues 685-778 and 787-890; these read EEAV…LYVC and ALAK…RQSV.

This sequence belongs to the peptidase C19 family. USP20/USP33 subfamily. As to quaternary structure, interacts with VHL, leading to its ubiquitination and subsequent degradation. Interacts with CCP110. Interacts with DIO2. Interacts with HIF1A. Interacts with ADRB2. Interacts with USP18. In terms of processing, ubiquitinated via a VHL-dependent pathway for proteasomal degradation.

It localises to the cytoplasm. The protein resides in the endoplasmic reticulum. The protein localises to the perinuclear region. It is found in the cytoskeleton. Its subcellular location is the microtubule organizing center. It localises to the centrosome. The catalysed reaction is Thiol-dependent hydrolysis of ester, thioester, amide, peptide and isopeptide bonds formed by the C-terminal Gly of ubiquitin (a 76-residue protein attached to proteins as an intracellular targeting signal).. Functionally, deubiquitinating enzyme that plays a role in many cellular processes including autophagy, cellular antiviral response or membrane protein biogenesis. Attenuates TLR4-mediated NF-kappa-B signaling by cooperating with beta-arrestin-2/ARRB2 and inhibiting TRAF6 autoubiquitination. Promotes cellular antiviral responses by deconjugating 'Lys-33' and 'Lys-48'-linked ubiquitination of STING1 leading to its stabilization. Plays an essential role in autophagy induction by regulating the ULK1 stability through deubiquitination of ULK1. Acts as a positive regulator for NF-kappa-B activation by TNF-alpha through deubiquitinating 'Lys-48'-linked polyubiquitination of SQSTM1, leading to its increased stability. Acts as a regulator of G-protein coupled receptor (GPCR) signaling by mediating the deubiquitination beta-2 adrenergic receptor (ADRB2). Plays a central role in ADRB2 recycling and resensitization after prolonged agonist stimulation by constitutively binding ADRB2, mediating deubiquitination of ADRB2 and inhibiting lysosomal trafficking of ADRB2. Upon dissociation, it is probably transferred to the translocated beta-arrestins, possibly leading to beta-arrestins deubiquitination and disengagement from ADRB2. This suggests the existence of a dynamic exchange between the ADRB2 and beta-arrestins. Deubiquitinates DIO2, thereby regulating thyroid hormone regulation. Deubiquitinates HIF1A, leading to stabilize HIF1A and enhance HIF1A-mediated activity. Deubiquitinates MCL1, a pivotal member of the anti-apoptotic Bcl-2 protein family to regulate its stability. Within the endoplasmic reticulum, participates with USP33 in the rescue of post-translationally targeted membrane proteins that are inappropriately ubiquitinated by the cytosolic protein quality control in the cytosol. This is Ubiquitin carboxyl-terminal hydrolase 20 (USP20) from Bos taurus (Bovine).